The sequence spans 241 residues: 2,3,4,5-tetrahydropyridine-2,6-dicarboxylate N-acetyltransferase (241 aa).

This sequence belongs to the transferase hexapeptide repeat family. DapH subfamily.

It catalyses the reaction (S)-2,3,4,5-tetrahydrodipicolinate + acetyl-CoA + H2O = L-2-acetamido-6-oxoheptanedioate + CoA. It functions in the pathway amino-acid biosynthesis; L-lysine biosynthesis via DAP pathway; LL-2,6-diaminopimelate from (S)-tetrahydrodipicolinate (acetylase route): step 1/3. Its function is as follows. Catalyzes the transfer of an acetyl group from acetyl-CoA to tetrahydrodipicolinate. The protein is 2,3,4,5-tetrahydropyridine-2,6-dicarboxylate N-acetyltransferase of Caldanaerobacter subterraneus subsp. tengcongensis (strain DSM 15242 / JCM 11007 / NBRC 100824 / MB4) (Thermoanaerobacter tengcongensis).